The following is a 280-amino-acid chain: Acetyl-coenzyme A carboxylase carboxyl transferase subunit beta (280 aa).

A CoA carboxyltransferase N-terminal domain is found at 24–280 (AWIKCDKCKN…IYTLIRHTHG (257 aa)). Zn(2+) contacts are provided by Cys-28, Cys-31, Cys-47, and Cys-50. The C4-type zinc finger occupies 28–50 (CDKCKNILYIEDLLKNLKICPHC).

This sequence belongs to the AccD/PCCB family. In terms of assembly, acetyl-CoA carboxylase is a heterohexamer composed of biotin carboxyl carrier protein (AccB), biotin carboxylase (AccC) and two subunits each of ACCase subunit alpha (AccA) and ACCase subunit beta (AccD). Zn(2+) serves as cofactor.

Its subcellular location is the cytoplasm. The catalysed reaction is N(6)-carboxybiotinyl-L-lysyl-[protein] + acetyl-CoA = N(6)-biotinyl-L-lysyl-[protein] + malonyl-CoA. It functions in the pathway lipid metabolism; malonyl-CoA biosynthesis; malonyl-CoA from acetyl-CoA: step 1/1. Its function is as follows. Component of the acetyl coenzyme A carboxylase (ACC) complex. Biotin carboxylase (BC) catalyzes the carboxylation of biotin on its carrier protein (BCCP) and then the CO(2) group is transferred by the transcarboxylase to acetyl-CoA to form malonyl-CoA. In Sulfurihydrogenibium sp. (strain YO3AOP1), this protein is Acetyl-coenzyme A carboxylase carboxyl transferase subunit beta.